The primary structure comprises 205 residues: Glycerol-3-phosphate acyltransferase (205 aa).

Helical transmembrane passes span 4-24 (IAPGLVLLAYLCGSISSAILV), 80-100 (PFWLGLVAIAACVGHIWPVFF), 107-127 (GVATAFGAIAPIGLDLTGVMA), 130-150 (WLLTILLSGYSSLGAIVSALI), and 155-175 (VWWFKPQYTFPVSMLSCLILL).

The protein belongs to the PlsY family. In terms of assembly, probably interacts with PlsX.

It localises to the cell inner membrane. It catalyses the reaction an acyl phosphate + sn-glycerol 3-phosphate = a 1-acyl-sn-glycero-3-phosphate + phosphate. It participates in lipid metabolism; phospholipid metabolism. In terms of biological role, catalyzes the transfer of an acyl group from acyl-phosphate (acyl-PO(4)) to glycerol-3-phosphate (G3P) to form lysophosphatidic acid (LPA). This enzyme utilizes acyl-phosphate as fatty acyl donor, but not acyl-CoA or acyl-ACP. The protein is Glycerol-3-phosphate acyltransferase of Klebsiella pneumoniae subsp. pneumoniae (strain ATCC 700721 / MGH 78578).